A 105-amino-acid chain; its full sequence is MLRVFGHGTVGGAFPLPILTVNVLGSFLMGVFVVAAAHRGLTHLSPLVMTGLLGGFTTFSAFSLETVTLYERGDVGQAALYVALSVGLSIAGLMAGLWLARGVFA.

3 helical membrane passes run 14 to 34 (FPLP…VFVV), 44 to 64 (LSPL…AFSL), and 79 to 99 (ALYV…GLWL). 2 residues coordinate Na(+): glycine 54 and threonine 57.

Belongs to the fluoride channel Fluc/FEX (TC 1.A.43) family.

It localises to the cell inner membrane. The enzyme catalyses fluoride(in) = fluoride(out). Its activity is regulated as follows. Na(+) is not transported, but it plays an essential structural role and its presence is essential for fluoride channel function. Functionally, fluoride-specific ion channel. Important for reducing fluoride concentration in the cell, thus reducing its toxicity. This chain is Fluoride-specific ion channel FluC, found in Jannaschia sp. (strain CCS1).